Here is a 1016-residue protein sequence, read N- to C-terminus: Rho family-interacting cell polarization regulator 2 (1016 aa).

2 positions are modified to phosphoserine: S21 and S37. Residues 44–73 (AVKKPQAKLKKMHNLGHKNSSPPKEPQPKR) are disordered. Over residues 48–59 (PQAKLKKMHNLG) the composition is skewed to basic residues. The segment at 55–113 (MHNLGHKNSSPPKEPQPKRVEEVYRALKNGLDEYLEVHQTELDKLTTQLKDMRRNSRLG) is involved in cell filopodia formation. A coiled-coil region spans residues 85–112 (LDEYLEVHQTELDKLTTQLKDMRRNSRL). S341 carries the phosphoserine modification. The segment covering 414–428 (TSTELPPGSQSSQNE) has biased composition (polar residues). The interval 414 to 469 (TSTELPPGSQSSQNEGLKDSSSASCSSSSREGSEPRPHPEGETQGLGKPEGCPVAT) is disordered. Low complexity predominate over residues 433–442 (SSSASCSSSS). A compositionally biased stretch (basic and acidic residues) spans 444–454 (EGSEPRPHPEG). Phosphoserine occurs at positions 520 and 532. The tract at residues 636-656 (DSVFSDTETEKNSYRSVHPEA) is disordered. Over residues 643–656 (ETEKNSYRSVHPEA) the composition is skewed to basic and acidic residues.

This sequence belongs to the RIPOR family. In terms of assembly, homooligomer; homooligomerization is regulated by RHOC and leads to the formation of concatemers through the association of N- and C-termini. Interacts (phosphorylated form) with 14-3-3 proteins; these interactions occur during myogenic cell differentiation and also induces T cell proliferation arrest. Interacts (phosphorylated form) with HDAC6; this interaction occurs during early myogenic differentiation, prevents HDAC6 to deacetylate tubulin and also induces T cell proliferation arrest. Interacts with DYSF; this interaction occurs during early myogenic differentiation. Interacts with MYOF. Interacts (via active GTP- or inactive GDP-bound forms) with RHOA; this interaction is direct, blocks the loading of GTP to RHOA and decreases upon chemokine CCL19 stimulation in primary T lymphocytes. Interacts with RHOC. Interacts (via phosphorylated form) with YWHAB; this interaction occurs in a chemokine-dependent manner and does not compete for binding of RIPOR2 with RHOA nor blocks inhibition of RIPOR2-mediated RHOA activity. Interacts with YWHAE. Interacts with YWHAQ. Phosphorylated. Chemokine-induced phosphorylation in neutrophils occurs in a PKC- and AKT-dependent manner, resulting in RIPOR2 interaction with YWHAB and stabilization. Phosphorylated by PKCA, AKT1 and MAPKAPK1A; in vitro.

The protein resides in the cytoplasm. It localises to the cytoskeleton. Its subcellular location is the cell projection. It is found in the filopodium. The protein localises to the apical cell membrane. The protein resides in the stereocilium. It localises to the stereocilium membrane. Functionally, acts as an inhibitor of the small GTPase RHOA and plays several roles in the regulation of myoblast and hair cell differentiation, lymphocyte T proliferation and neutrophil polarization. Plays a role in fetal mononuclear myoblast differentiation by promoting filopodia and myotube formation. Maintains naive T lymphocytes in a quiescent state and prevents chemokine-induced T lymphocyte responses, such as cell adhesion, polarization and migration. Involved also in the regulation of neutrophil polarization, chemotaxis and adhesion. Required for normal development of inner and outer hair cell stereocilia within the cochlea of the inner ear. Plays a role for maintaining the structural organization of the basal domain of stereocilia. Involved in mechanosensory hair cell function. Required for normal hearing. In Bos taurus (Bovine), this protein is Rho family-interacting cell polarization regulator 2.